We begin with the raw amino-acid sequence, 223 residues long: 2-C-methyl-D-erythritol 4-phosphate cytidylyltransferase (223 aa).

Belongs to the IspD/TarI cytidylyltransferase family. IspD subfamily.

It carries out the reaction 2-C-methyl-D-erythritol 4-phosphate + CTP + H(+) = 4-CDP-2-C-methyl-D-erythritol + diphosphate. It participates in isoprenoid biosynthesis; isopentenyl diphosphate biosynthesis via DXP pathway; isopentenyl diphosphate from 1-deoxy-D-xylulose 5-phosphate: step 2/6. In terms of biological role, catalyzes the formation of 4-diphosphocytidyl-2-C-methyl-D-erythritol from CTP and 2-C-methyl-D-erythritol 4-phosphate (MEP). The sequence is that of 2-C-methyl-D-erythritol 4-phosphate cytidylyltransferase from Prochlorococcus marinus (strain MIT 9215).